The primary structure comprises 150 residues: Large ribosomal subunit protein bL9 (150 aa).

It belongs to the bacterial ribosomal protein bL9 family.

Binds to the 23S rRNA. This Paracidovorax citrulli (strain AAC00-1) (Acidovorax citrulli) protein is Large ribosomal subunit protein bL9.